Here is a 183-residue protein sequence, read N- to C-terminus: Potassium-transporting ATPase KdpC subunit (183 aa).

Residues 10–30 (LTVFTLILFAVIYPLAIYGIA) traverse the membrane as a helical segment.

Belongs to the KdpC family. As to quaternary structure, the system is composed of three essential subunits: KdpA, KdpB and KdpC.

It is found in the cell inner membrane. Functionally, part of the high-affinity ATP-driven potassium transport (or Kdp) system, which catalyzes the hydrolysis of ATP coupled with the electrogenic transport of potassium into the cytoplasm. This subunit acts as a catalytic chaperone that increases the ATP-binding affinity of the ATP-hydrolyzing subunit KdpB by the formation of a transient KdpB/KdpC/ATP ternary complex. This Flavobacterium johnsoniae (strain ATCC 17061 / DSM 2064 / JCM 8514 / BCRC 14874 / CCUG 350202 / NBRC 14942 / NCIMB 11054 / UW101) (Cytophaga johnsonae) protein is Potassium-transporting ATPase KdpC subunit.